A 479-amino-acid chain; its full sequence is Lysosomal protective protein (479 aa).

Positions 1–27 are cleaved as a signal peptide; the sequence is MFRAALWPPVLLLLQLLLLACAPGGEG. Intrachain disulfides connect cysteine 87-cysteine 361, cysteine 239-cysteine 255, cysteine 240-cysteine 245, and cysteine 280-cysteine 330. A glycan (N-linked (GlcNAc...) asparagine) is linked at asparagine 144. Residue serine 177 is part of the active site. Asparagine 332 carries N-linked (GlcNAc...) asparagine glycosylation. Catalysis depends on residues aspartate 399 and histidine 456.

The protein belongs to the peptidase S10 family. As to quaternary structure, heterodimer of a 32 kDa chain and a 20 kDa chain; disulfide-linked.

Its subcellular location is the lysosome. It carries out the reaction Release of a C-terminal amino acid with broad specificity.. Protective protein appears to be essential for both the activity of beta-galactosidase and neuraminidase, it associates with these enzymes and exerts a protective function necessary for their stability and activity. This protein is also a carboxypeptidase and can deamidate tachykinins. This is Lysosomal protective protein (CTSA) from Bos taurus (Bovine).